The chain runs to 389 residues: tRNA-specific 2-thiouridylase MnmA (389 aa).

Residues 34 to 41 (AMSGGVDS) and leucine 60 contribute to the ATP site. The active-site Nucleophile is the cysteine 128. Cysteine 128 and cysteine 225 are oxidised to a cystine. Glycine 152 is a binding site for ATP. The tract at residues 174–176 (RDQ) is interaction with tRNA. Residue cysteine 225 is the Cysteine persulfide intermediate of the active site.

Belongs to the MnmA/TRMU family.

The protein resides in the cytoplasm. It catalyses the reaction S-sulfanyl-L-cysteinyl-[protein] + uridine(34) in tRNA + AH2 + ATP = 2-thiouridine(34) in tRNA + L-cysteinyl-[protein] + A + AMP + diphosphate + H(+). Its function is as follows. Catalyzes the 2-thiolation of uridine at the wobble position (U34) of tRNA, leading to the formation of s(2)U34. In Paracoccus denitrificans (strain Pd 1222), this protein is tRNA-specific 2-thiouridylase MnmA.